Reading from the N-terminus, the 509-residue chain is Inositol-3-phosphate synthase 1 (509 aa).

It belongs to the myo-inositol 1-phosphate synthase family. It depends on NAD(+) as a cofactor. Highly expressed in anthers, but transcripts are undetectable in roots, leaves, flowers and embryos.

It is found in the cytoplasm. It catalyses the reaction D-glucose 6-phosphate = 1D-myo-inositol 3-phosphate. It participates in polyol metabolism; myo-inositol biosynthesis; myo-inositol from D-glucose 6-phosphate: step 1/2. Functionally, key enzyme in myo-inositol biosynthesis pathway that catalyzes the conversion of glucose 6-phosphate to 1-myo-inositol 1-phosphate in a NAD-dependent manner. Is a key enzyme in the phytic acid biosynthesis pathway in seeds. The sequence is that of Inositol-3-phosphate synthase 1 from Oryza sativa subsp. japonica (Rice).